We begin with the raw amino-acid sequence, 449 residues long: Plasmepsin IV (449 aa).

Topologically, residues 1–37 (MALTVKEEEFSNTLIKNASAFDRLKLGNLKNLKIQKK) are cytoplasmic. The propeptide occupies 1 to 121 (MALTVKEEEF…SGYAQKGYLG (121 aa)). A helical; Signal-anchor for type II membrane protein membrane pass occupies residues 38 to 58 (LQFLYLILFVLITGVFFFFLI). At 59–449 (GNFYSHRKLY…SVGFAVAKNL (391 aa)) the chain is on the lumenal side. The 308-residue stretch at 137 to 444 (FYGEGQIGTN…DYEKESVGFA (308 aa)) folds into the Peptidase A1 domain. The active site involves D155. A disulfide bridge links C168 with C173. D335 is an active-site residue. A disulfide bridge connects residues C370 and C406.

It belongs to the peptidase A1 family. As to quaternary structure, component of the hemozoin formation complex (HFC) composed of falcipains FP2A and/or FP2B, plasmepsins PMII, PMIII/HAP and PMIV, heme detoxifying protein HDP and falcilysin FLN. The HFC complex is involved in hemoglobin degradation and detoxification of heme in the food vacuole during the asexual blood stage. In terms of processing, proteolytically cleaved into the soluble active mature form by cysteine proteases in the digestive vacuole of trophozoites. Proteolysis requires an acidic environment. Autoprocessing or transprocessing by other plasmepsins such as PMII may serve as an alternate activation system.

The protein resides in the membrane. It localises to the vacuole lumen. The enzyme catalyses Hydrolysis of the bonds linking certain hydrophobic residues in hemoglobin or globin. Also cleaves small molecules substrates such as Ala-Leu-Glu-Arg-Thr-Phe-|-Phe(NO2)-Ser-Phe-Pro-Thr.. With respect to regulation, inhibited by KNI derived compounds KNI-10333 and to a lesser extent KNI-10743. In terms of biological role, during the asexual blood stage, catalyzes the cleavage of denatured host hemoglobin (Hb). Digestion of host Hb is an essential step which provides the parasite with amino acids for protein synthesis, and regulates osmolarity. The chain is Plasmepsin IV from Plasmodium falciparum (isolate 3D7).